The chain runs to 245 residues: Rhamnogalacturonan acetylesterase (245 aa).

The first 17 residues, 1–17, serve as a signal peptide directing secretion; the sequence is MKSIALTSLSLLPSALA. Serine 26 functions as the Nucleophile in the catalytic mechanism. A disulfide bond links cysteine 100 and cysteine 108. Active-site residues include aspartate 204 and histidine 207. A disulfide bond links cysteine 226 and cysteine 244.

This sequence belongs to the 'GDSL' lipolytic enzyme family.

Its subcellular location is the secreted. The catalysed reaction is Hydrolytic cleavage of 2-O-acetyl- or 3-O-acetyl groups of alpha-D-galacturonic acid in rhamnogalacturonan I.. Functionally, plays a key role in the degradation of rhamnogalacturonan in the cell wall. Involved in degradation of pectin. The polypeptide is Rhamnogalacturonan acetylesterase (Emericella nidulans (strain FGSC A4 / ATCC 38163 / CBS 112.46 / NRRL 194 / M139) (Aspergillus nidulans)).